The sequence spans 43 residues: Metallothionein-3 (43 aa).

It belongs to the metallothionein superfamily. Type 5 family.

In terms of biological role, this protein binds cations of several transition elements. Thought to be involved in metal ion homeostasis. This Drosophila melanogaster (Fruit fly) protein is Metallothionein-3 (MtnC).